Here is a 200-residue protein sequence, read N- to C-terminus: LHFPL tetraspan subfamily member 7 protein (200 aa).

4 helical membrane-spanning segments follow: residues 5-27, 68-88, 113-133, and 150-170; these read VWVA…PAWF, VSAV…IFLL, AATA…SPFI, and LGWG…LPII.

It belongs to the TMEM211 family.

The protein resides in the membrane. In Homo sapiens (Human), this protein is LHFPL tetraspan subfamily member 7 protein.